We begin with the raw amino-acid sequence, 484 residues long: Siroheme synthase 1 (484 aa).

The interval 1–205 is precorrin-2 dehydrogenase /sirohydrochlorin ferrochelatase; that stretch reads MHHYPIFLKL…GREAEGEAEL (205 aa). Residues 22-23 and 43-44 each bind NAD(+); these read EA and PV. The residue at position 130 (S130) is a Phosphoserine. The tract at residues 220–484 is uroporphyrinogen-III C-methyltransferase; the sequence is GEVFLVGAGP…DPCWTGGMRD (265 aa). P229 serves as a coordination point for S-adenosyl-L-methionine. D252 functions as the Proton acceptor in the catalytic mechanism. Catalysis depends on K274, which acts as the Proton donor. Residues 305 to 307, L310, 335 to 336, M387, and A416 each bind S-adenosyl-L-methionine; these read GGD and SA.

This sequence in the N-terminal section; belongs to the precorrin-2 dehydrogenase / sirohydrochlorin ferrochelatase family. The protein in the C-terminal section; belongs to the precorrin methyltransferase family.

It carries out the reaction uroporphyrinogen III + 2 S-adenosyl-L-methionine = precorrin-2 + 2 S-adenosyl-L-homocysteine + H(+). The catalysed reaction is precorrin-2 + NAD(+) = sirohydrochlorin + NADH + 2 H(+). The enzyme catalyses siroheme + 2 H(+) = sirohydrochlorin + Fe(2+). It functions in the pathway cofactor biosynthesis; adenosylcobalamin biosynthesis; precorrin-2 from uroporphyrinogen III: step 1/1. Its pathway is cofactor biosynthesis; adenosylcobalamin biosynthesis; sirohydrochlorin from precorrin-2: step 1/1. The protein operates within porphyrin-containing compound metabolism; siroheme biosynthesis; precorrin-2 from uroporphyrinogen III: step 1/1. It participates in porphyrin-containing compound metabolism; siroheme biosynthesis; siroheme from sirohydrochlorin: step 1/1. It functions in the pathway porphyrin-containing compound metabolism; siroheme biosynthesis; sirohydrochlorin from precorrin-2: step 1/1. Functionally, multifunctional enzyme that catalyzes the SAM-dependent methylations of uroporphyrinogen III at position C-2 and C-7 to form precorrin-2 via precorrin-1. Then it catalyzes the NAD-dependent ring dehydrogenation of precorrin-2 to yield sirohydrochlorin. Finally, it catalyzes the ferrochelation of sirohydrochlorin to yield siroheme. In Halorhodospira halophila (strain DSM 244 / SL1) (Ectothiorhodospira halophila (strain DSM 244 / SL1)), this protein is Siroheme synthase 1.